The primary structure comprises 89 residues: MANHKSAKKMMKVIAKRTLVNKMRKSKTRTAIRRLVDIIKSGDKENVVLAFRNAESNLHKCVNKGVIHRNTAARKISRLNAKVKALMTA.

The protein belongs to the bacterial ribosomal protein bS20 family.

Its function is as follows. Binds directly to 16S ribosomal RNA. The sequence is that of Small ribosomal subunit protein bS20 from Wolbachia pipientis subsp. Culex pipiens (strain wPip).